We begin with the raw amino-acid sequence, 355 residues long: Hyaluronan and proteoglycan link protein 1 (355 aa).

The propeptide occupies 1-9 (MTSLLFLVL). N-linked (GlcNAc...) asparagine glycosylation is found at Asn-21 and Asn-56. One can recognise an Ig-like V-type domain in the interval 38 to 156 (PRLLVVAEQA…EDDTAVVALN (119 aa)). Disulfide bonds link Cys-61/Cys-140, Cys-182/Cys-253, Cys-206/Cys-227, Cys-280/Cys-350, and Cys-305/Cys-326. 2 consecutive Link domains span residues 160–255 (VVFP…FCFT) and 260–352 (GRFY…YCFR).

Belongs to the HAPLN family.

Its subcellular location is the secreted. The protein localises to the extracellular space. It localises to the extracellular matrix. Functionally, stabilizes the aggregates of proteoglycan monomers with hyaluronic acid in the extracellular cartilage matrix. This Gallus gallus (Chicken) protein is Hyaluronan and proteoglycan link protein 1 (HAPLN1).